A 205-amino-acid chain; its full sequence is Urease accessory protein UreG 1 (205 aa).

14-21 (GPVGSGKT) contributes to the GTP binding site.

The protein belongs to the SIMIBI class G3E GTPase family. UreG subfamily. As to quaternary structure, homodimer. UreD, UreF and UreG form a complex that acts as a GTP-hydrolysis-dependent molecular chaperone, activating the urease apoprotein by helping to assemble the nickel containing metallocenter of UreC. The UreE protein probably delivers the nickel.

The protein localises to the cytoplasm. Its function is as follows. Facilitates the functional incorporation of the urease nickel metallocenter. This process requires GTP hydrolysis, probably effectuated by UreG. The protein is Urease accessory protein UreG 1 of Methylobacterium radiotolerans (strain ATCC 27329 / DSM 1819 / JCM 2831 / NBRC 15690 / NCIMB 10815 / 0-1).